Here is a 397-residue protein sequence, read N- to C-terminus: Carbamoyl phosphate synthase small chain (397 aa).

The tract at residues 1-204 (MSPLLPSFPF…PAYRTLDTSK (204 aa)) is CPSase. Residues serine 53, glycine 256, and glycine 258 each contribute to the L-glutamine site. In terms of domain architecture, Glutamine amidotransferase type-1 spans 208–395 (KVVAYDFGVK…MELMNAAKKE (188 aa)). The Nucleophile role is filled by cysteine 284. L-glutamine is bound by residues leucine 285, glutamine 288, asparagine 326, glycine 328, and phenylalanine 329. Active-site residues include histidine 368 and glutamate 370.

The protein belongs to the CarA family. As to quaternary structure, composed of two chains; the small (or glutamine) chain promotes the hydrolysis of glutamine to ammonia, which is used by the large (or ammonia) chain to synthesize carbamoyl phosphate. Tetramer of heterodimers (alpha,beta)4.

It carries out the reaction hydrogencarbonate + L-glutamine + 2 ATP + H2O = carbamoyl phosphate + L-glutamate + 2 ADP + phosphate + 2 H(+). The enzyme catalyses L-glutamine + H2O = L-glutamate + NH4(+). Its pathway is amino-acid biosynthesis; L-arginine biosynthesis; carbamoyl phosphate from bicarbonate: step 1/1. It functions in the pathway pyrimidine metabolism; UMP biosynthesis via de novo pathway; (S)-dihydroorotate from bicarbonate: step 1/3. In terms of biological role, small subunit of the glutamine-dependent carbamoyl phosphate synthetase (CPSase). CPSase catalyzes the formation of carbamoyl phosphate from the ammonia moiety of glutamine, carbonate, and phosphate donated by ATP, constituting the first step of 2 biosynthetic pathways, one leading to arginine and/or urea and the other to pyrimidine nucleotides. The small subunit (glutamine amidotransferase) binds and cleaves glutamine to supply the large subunit with the substrate ammonia. The protein is Carbamoyl phosphate synthase small chain of Polynucleobacter asymbioticus (strain DSM 18221 / CIP 109841 / QLW-P1DMWA-1) (Polynucleobacter necessarius subsp. asymbioticus).